Reading from the N-terminus, the 484-residue chain is tRNA sulfurtransferase (484 aa).

One can recognise a THUMP domain in the interval 63-167 (DVFADRLACI…QDKLYMVERR (105 aa)). ATP-binding positions include 185 to 186 (LI), Lys-267, Gly-289, and Gln-298. Residues Cys-346 and Cys-458 are joined by a disulfide bond. The Rhodanese domain occupies 406–484 (VASGEIIIDV…GYTNVKVYRP (79 aa)). Catalysis depends on Cys-458, which acts as the Cysteine persulfide intermediate.

This sequence belongs to the ThiI family.

Its subcellular location is the cytoplasm. The catalysed reaction is [ThiI sulfur-carrier protein]-S-sulfanyl-L-cysteine + a uridine in tRNA + 2 reduced [2Fe-2S]-[ferredoxin] + ATP + H(+) = [ThiI sulfur-carrier protein]-L-cysteine + a 4-thiouridine in tRNA + 2 oxidized [2Fe-2S]-[ferredoxin] + AMP + diphosphate. The enzyme catalyses [ThiS sulfur-carrier protein]-C-terminal Gly-Gly-AMP + S-sulfanyl-L-cysteinyl-[cysteine desulfurase] + AH2 = [ThiS sulfur-carrier protein]-C-terminal-Gly-aminoethanethioate + L-cysteinyl-[cysteine desulfurase] + A + AMP + 2 H(+). It participates in cofactor biosynthesis; thiamine diphosphate biosynthesis. Catalyzes the ATP-dependent transfer of a sulfur to tRNA to produce 4-thiouridine in position 8 of tRNAs, which functions as a near-UV photosensor. Also catalyzes the transfer of sulfur to the sulfur carrier protein ThiS, forming ThiS-thiocarboxylate. This is a step in the synthesis of thiazole, in the thiamine biosynthesis pathway. The sulfur is donated as persulfide by IscS. The chain is tRNA sulfurtransferase from Shewanella frigidimarina (strain NCIMB 400).